The chain runs to 351 residues: N-acetyl-gamma-glutamyl-phosphate reductase (351 aa).

Cys-154 is a catalytic residue.

Belongs to the NAGSA dehydrogenase family. Type 1 subfamily.

The protein localises to the cytoplasm. The enzyme catalyses N-acetyl-L-glutamate 5-semialdehyde + phosphate + NADP(+) = N-acetyl-L-glutamyl 5-phosphate + NADPH + H(+). It participates in amino-acid biosynthesis; L-arginine biosynthesis; N(2)-acetyl-L-ornithine from L-glutamate: step 3/4. Catalyzes the NADPH-dependent reduction of N-acetyl-5-glutamyl phosphate to yield N-acetyl-L-glutamate 5-semialdehyde. This chain is N-acetyl-gamma-glutamyl-phosphate reductase, found in Prochlorococcus marinus (strain MIT 9301).